A 617-amino-acid polypeptide reads, in one-letter code: uncharacterized protein (617 aa).

Low complexity-rich tracts occupy residues 1 to 16 (MSKC…SNSS) and 36 to 45 (STTSSNGSNS). Residues 1-49 (MSKCATPTPSTSSNSSDEAKRSPQPMSRGFPQRNMSTTSSNGSNSPRHR) are disordered. A run of 3 helical transmembrane segments spans residues 219 to 239 (LMIG…GGLA), 262 to 282 (TAGA…FTGY), and 427 to 447 (PITL…LLTM).

Belongs to the TMCO4 family.

It localises to the membrane. This is an uncharacterized protein from Caenorhabditis elegans.